Reading from the N-terminus, the 360-residue chain is Inward rectifier potassium channel 13 (360 aa).

At 1 to 50 (MDSRNCKVNAPLLSQRYRRMVTKDGHSTLQMDGAQRGLVYLRDAWGILMD) the chain is on the cytoplasmic side. Residues 51-77 (MRWRWMMLVFSASFVVHWLVFAVLWYA) traverse the membrane as a helical segment. The Extracellular segment spans residues 78–105 (VAEMNGDLEIDHDVPPENHTICVKHITS). The helical; Pore-forming intramembrane region spans 106 to 122 (FTAAFSFSLETQLTIGY). Residues 119–124 (TIGYGT) carry the Selectivity filter motif. At 123–131 (GTMFPSGDC) the chain is on the extracellular side. A helical transmembrane segment spans residues 132–157 (PSAIALLAIQMLLGLMLEAFITGAFV). The Cytoplasmic segment spans residues 158–360 (AKIARPKNRA…FQIAETGLTE (203 aa)). The residue at position 201 (Ser201) is a Phosphoserine; by PKC. Residue Ser287 is modified to Phosphoserine; by PKA.

The protein belongs to the inward rectifier-type potassium channel (TC 1.A.2.1) family. KCNJ13 subfamily. As to quaternary structure, homotetramer. Interacts with RAB28; the interaction may facilitate cone outer segments phagocytosis. Phosphorylation at Ser-201 by PKC strongly inhibits ionic currents, while phosphorylation at Ser-287 by PKA increases them.

Its subcellular location is the membrane. The protein localises to the cell membrane. It catalyses the reaction K(+)(in) = K(+)(out). Its activity is regulated as follows. Inhibited by Ba(2+) and Cs(+), although sensitivity to those inhibitors is much lower than in other Kir channels. Its function is as follows. Inward rectifier potassium channels are characterized by a greater tendency to allow potassium to flow into the cell rather than out of it. Their voltage dependence is regulated by the concentration of extracellular potassium; as external potassium is raised, the voltage range of the channel opening shifts to more positive voltages. The inward rectification is mainly due to the blockage of outward current by internal magnesium. KCNJ13 has a very low single channel conductance, low sensitivity to block by external barium and cesium, and no dependence of its inward rectification properties on the internal blocking particle magnesium. The sequence is that of Inward rectifier potassium channel 13 (Kcnj13) from Rattus norvegicus (Rat).